The chain runs to 39 residues: Conotoxin Cl14.7 (39 aa).

Residues 1-15 constitute a propeptide that is removed on maturation; sequence MGDLSEADSMKHQLQ.

Post-translationally, contains 2 disulfide bonds. As to expression, expressed by the venom duct.

Its subcellular location is the secreted. The polypeptide is Conotoxin Cl14.7 (Californiconus californicus (California cone)).